The primary structure comprises 185 residues: Photosystem I assembly protein Ycf4 (185 aa).

Helical transmembrane passes span 21 to 43 (NFFWACILFLGSLGFLSVGISSY) and 68 to 90 (FYGIAGLFISSYLCCTILWNVGS).

The protein belongs to the Ycf4 family.

Its subcellular location is the plastid. The protein localises to the chloroplast thylakoid membrane. In terms of biological role, seems to be required for the assembly of the photosystem I complex. This Aegilops tauschii (Tausch's goatgrass) protein is Photosystem I assembly protein Ycf4.